Here is a 145-residue protein sequence, read N- to C-terminus: Mitochondrial import receptor subunit TOM20 homolog (145 aa).

The Mitochondrial intermembrane segment spans residues 1-6; sequence MVGRNS. The chain crosses the membrane as a helical span at residues 7 to 24; it reads AIAAGVCGALFIGYCIYF. At 25–145 the chain is on the cytoplasmic side; that stretch reads DRKRRSDPNF…AQSLAEDDVE (121 aa). Glycyl lysine isopeptide (Lys-Gly) (interchain with G-Cter in ubiquitin) cross-links involve residues lysine 35, lysine 56, lysine 61, and lysine 68. Phosphoserine occurs at positions 135 and 138.

It belongs to the Tom20 family. In terms of assembly, forms part of the preprotein translocase complex of the outer mitochondrial membrane (TOM complex) which consists of at least 7 different proteins (TOMM5, TOMM6, TOMM7, TOMM20, TOMM22, TOMM40 and TOMM70). Interacts with TOM22. Interacts with APEX1. Interacts with TBC1D21. Upon mitochondrial depolarization, interacts with PINK1; the interaction is required for PINK1-TOM-TIM23 supercomplex formation which is critical for PINK1 stabilization at the outer mitochondrial membrane, kinase activation and downstream mitophagy. In terms of processing, ubiquitinated by PRKN during mitophagy, leading to its degradation and enhancement of mitophagy. Deubiquitinated by USP30. Expressed in brain, kidney, stomach, colon, jejunum, ileum, testis, ovary and oviduct (at protein level). In the brain, expressed in neural cells of the cerebrum and cerebellum (at protein level). In the kidney, expressed in the proximal to distal tubule in the cortex and the outer and inner zones of the medulla (at protein level). In the stomach, expressed in the basal layer of stratified squamous epithelia in the forestomach and in the gastric pit and fundic gland of the glandular stomach (at protein level). Expressed in epithelial cells of the jejunum, ileum, and colon (at protein level). In the testis, expressed by spermatocytes and spermatogonia (at protein level). In the ovaries, expressed by follicular epithelial cells and corpus luteum cells (at protein level). In the oviduct, expressed in the epithelia of the isthmus and the ciliated cells of the ampulla (at protein level). Expressed in the sperm midpiece (at protein level).

The protein resides in the mitochondrion outer membrane. In terms of biological role, central component of the receptor complex responsible for the recognition and translocation of cytosolically synthesized mitochondrial preproteins. Together with TOM22 functions as the transit peptide receptor at the surface of the mitochondrion outer membrane and facilitates the movement of preproteins into the TOM40 translocation pore. Required for the translocation across the mitochondrial outer membrane of cytochrome P450 monooxygenases. The protein is Mitochondrial import receptor subunit TOM20 homolog (Tomm20) of Mus musculus (Mouse).